A 707-amino-acid polypeptide reads, in one-letter code: 65-kDa microtubule-associated protein 3 (707 aa).

5 coiled-coil regions span residues 49 to 84 (LEVY…CSAM), 157 to 179 (NLSM…EKID), 269 to 289 (QQEY…ITEA), 354 to 374 (IVDA…IKEE), and 464 to 486 (LEEY…DQKK). A disordered region spans residues 495 to 574 (QEALYGSKPS…PSRKQSMNPS (80 aa)). The segment covering 500–512 (GSKPSPSKPLGGK) has biased composition (low complexity). Residues serine 504 and serine 528 each carry the phosphoserine modification.

This sequence belongs to the MAP65/ASE1 family. Forms a dimer. Binds to microtubules (MT) during cell division. Bundles polymerized MT via the formation of 25-nm crossbridges with centrally located endocytic MT, and midline phragmoplast MT. In terms of tissue distribution, expressed in all tissues enriched in dividing cells, such as the root and shoot apical meristem, foliar primordia, and young leaves, and embryos.

Its subcellular location is the nucleus. It is found in the cytoplasm. The protein resides in the cytoskeleton. It localises to the phragmoplast. Its function is as follows. Microtubule-associated protein that plays a critical role in organizing the mitotic microtubule array during both early and late mitosis in all plant organs. Essential for the cytokinesis, especially in roots, by maintaining the integrity of the overlapped microtubules in the phragmoplast. Required during root morphogenesis. Needed for giant cell development during root knot nematode infection, where cytokinesis is initiated but not completed. This chain is 65-kDa microtubule-associated protein 3 (MAP65-3), found in Arabidopsis thaliana (Mouse-ear cress).